The following is a 391-amino-acid chain: Na(+)/H(+) antiporter NhaA 1 (391 aa).

The next 11 membrane-spanning stretches (helical) occupy residues 25–45 (AGGI…NSPL), 56–76 (VWLG…IFFL), 98–118 (ALPG…YIAI), 128–148 (GWAI…SLLG), 157–177 (VFLA…IAFF), 180–200 (AGLN…LIVM), 208–228 (LLPY…SGVH), 264–284 (VAFA…LAGI), 297–317 (VALG…VLAI), 335–355 (GVAM…NLAF), and 364–384 (EVKV…IVLL).

The protein belongs to the NhaA Na(+)/H(+) (TC 2.A.33) antiporter family.

Its subcellular location is the cell inner membrane. It catalyses the reaction Na(+)(in) + 2 H(+)(out) = Na(+)(out) + 2 H(+)(in). Its function is as follows. Na(+)/H(+) antiporter that extrudes sodium in exchange for external protons. This chain is Na(+)/H(+) antiporter NhaA 1, found in Pseudomonas syringae pv. syringae (strain B728a).